The chain runs to 464 residues: Phosphoglucosamine mutase (464 aa).

Residue serine 112 is the Phosphoserine intermediate of the active site. Residues serine 112, aspartate 252, aspartate 254, and aspartate 256 each coordinate Mg(2+). Serine 112 carries the phosphoserine modification.

This sequence belongs to the phosphohexose mutase family. It depends on Mg(2+) as a cofactor. In terms of processing, activated by phosphorylation.

The enzyme catalyses alpha-D-glucosamine 1-phosphate = D-glucosamine 6-phosphate. In terms of biological role, catalyzes the conversion of glucosamine-6-phosphate to glucosamine-1-phosphate. The sequence is that of Phosphoglucosamine mutase from Synechococcus sp. (strain CC9902).